Reading from the N-terminus, the 3623-residue chain is Cubilin (3623 aa).

The first 20 residues, 1–20 (MSSQFLWGFVTLLMIAELDG), serve as a signal peptide directing secretion. Positions 21 to 32 (KTGKPEQRGQKR) are cleaved as a propeptide — removed in mature form. The interval 39–46 (PRMTTEEG) is interaction with AMN. An N-linked (GlcNAc...) asparagine glycan is attached at Asn-95. The region spanning 129 to 165 (ERKVCSSNPCLNGGTCVNLHDSFVCICPSQWKGLFCS) is the EGF-like 1 domain. 9 disulfide bridges follow: Cys-133-Cys-144, Cys-138-Cys-153, Cys-155-Cys-164, Cys-171-Cys-187, Cys-181-Cys-196, Cys-198-Cys-207, Cys-264-Cys-277, Cys-271-Cys-286, and Cys-289-Cys-300. The region spanning 167 to 208 (DVNECVVYSGTPFGCQSGSTCVNTVGSFRCDCTPDTYGPQCA) is the EGF-like 2; calcium-binding domain. In terms of domain architecture, EGF-like 3; calcium-binding spans 260-301 (DKDECSLQPSPCSEHAQCFNTQGSFYCGACPKGWQGNGYECQ). The EGF-like 4; calcium-binding domain maps to 302-345 (DINECEINNGGCSQAPLVPCLNTPGSFSCGNCPAGFSGDGRVCT). EGF-like domains follow at residues 346 to 385 (PVDICSIHNGGCHPEATCSSSPVLGSFLPVCTCPPGYTGN) and 395 to 430 (LSNICSRHPCVNGQCIETVSSYFCKCDSGWSGQNCT). Cystine bridges form between Cys-350–Cys-363, Cys-357–Cys-376, Cys-399–Cys-409, Cys-404–Cys-418, Cys-420–Cys-429, Cys-436–Cys-447, Cys-441–Cys-456, Cys-458–Cys-467, Cys-474–Cys-500, Cys-527–Cys-549, Cys-590–Cys-616, Cys-643–Cys-665, and Cys-708–Cys-734. Asn-428 carries N-linked (GlcNAc...) asparagine glycosylation. The EGF-like 7; calcium-binding domain occupies 432–468 (NINDCSSNPCLNGGTCIDGINGFTCDCTSSWTGYYCQ). 27 consecutive CUB domains span residues 474-586 (CGGI…WEAK), 590-702 (CGGI…YLTT), 708-816 (CGGN…YQVA), 817-928 (CGGM…FSSD), 932-1042 (CGEV…YEAI), 1048-1161 (CLYD…WDGS), 1165-1277 (CGGN…FRQR), 1278-1389 (CDNV…WFTH), 1391-1506 (CGGE…WRAV), 1510-1619 (CGGI…FREE), 1620-1734 (CGGR…YSAS), 1738-1850 (CGGS…FKNI), 1852-1963 (GNNN…WFAV), 1978-2091 (CGGF…FHKS), 2092-2213 (CGGY…YEAK), 2217-2334 (CGGT…YSIA), 2336-2448 (CGGT…FKSS), 2452-2565 (CGGD…YTST), 2570-2687 (CGGF…YSFT), 2689-2801 (CGGI…WTTN), 2805-2919 (CGGT…FISR), 2920-3035 (CGRT…YRAI), 3037-3150 (CGGI…FRET), 3157-3274 (CGGY…YTFV), 3278-3393 (CGGT…YQIA), 3395-3507 (CNRE…WTSS), and 3511-3623 (CGGT…MWSS). N-linked (GlcNAc...) asparagine glycosylation occurs at Asn-491. N-linked (GlcNAc...) asparagine glycosylation is found at Asn-711 and Asn-749. Cys-761 and Cys-779 form a disulfide bridge. N-linked (GlcNAc...) asparagine glycosylation is present at Asn-781. Residues Cys-817 and Cys-842 are joined by a disulfide bond. An N-linked (GlcNAc...) asparagine glycan is attached at Asn-857. Cystine bridges form between Cys-869/Cys-891 and Cys-932/Cys-958. Asn-957 carries an N-linked (GlcNAc...) asparagine glycan. Glu-980 is a binding site for Ca(2+). An N-linked (GlcNAc...) asparagine glycan is attached at Asn-984. Cys-985 and Cys-1005 form a disulfide bridge. 3 residues coordinate Ca(2+): Asp-988, Asp-1027, and Leu-1030. Cys-1048 and Cys-1074 are joined by a disulfide. Positions 1096, 1105, and 1146 each coordinate Ca(2+). The cysteines at positions 1165 and 1191 are disulfide-linked. N-linked (GlcNAc...) asparagine glycosylation is present at Asn-1168. Residues Glu-1213, Asp-1221, Asp-1262, Gly-1264, and Gln-1265 each coordinate Ca(2+). Residues Cys-1218 and Cys-1240 are joined by a disulfide bond. An intrachain disulfide couples Cys-1278 to Cys-1306. N-linked (GlcNAc...) asparagine glycans are attached at residues Asn-1285, Asn-1307, and Asn-1319. Position 1328 (Glu-1328) interacts with Ca(2+). Asn-1332 is a glycosylation site (N-linked (GlcNAc...) asparagine). Cys-1333 and Cys-1351 are joined by a disulfide. Ca(2+)-binding residues include Asp-1336, Asp-1373, and Ile-1375. 2 cysteine pairs are disulfide-bonded: Cys-1391–Cys-1417 and Cys-1444–Cys-1466. An N-linked (GlcNAc...) asparagine glycan is attached at Asn-1500. Cysteines 1510 and 1536 form a disulfide. Residues Asn-1551, Asn-1646, and Asn-1671 are each glycosylated (N-linked (GlcNAc...) asparagine). Cys-1620 and Cys-1647 are disulfide-bonded. Cystine bridges form between Cys-1675–Cys-1697, Cys-1738–Cys-1764, and Cys-1791–Cys-1812. Asn-1802 and Asn-1819 each carry an N-linked (GlcNAc...) asparagine glycan. Intrachain disulfides connect Cys-1905–Cys-1927, Cys-1978–Cys-2006, and Cys-2032–Cys-2054. 2 N-linked (GlcNAc...) asparagine glycosylation sites follow: Asn-2085 and Asn-2117. Disulfide bonds link Cys-2092-Cys-2118 and Cys-2217-Cys-2247. An N-linked (GlcNAc...) asparagine glycan is attached at Asn-2274. Cystine bridges form between Cys-2275/Cys-2297, Cys-2336/Cys-2363, Cys-2390/Cys-2411, Cys-2452/Cys-2478, and Cys-2505/Cys-2527. Residue Asn-2400 is glycosylated (N-linked (GlcNAc...) asparagine). 3 N-linked (GlcNAc...) asparagine glycosylation sites follow: Asn-2531, Asn-2581, and Asn-2610. Residues Cys-2570 and Cys-2599 are joined by a disulfide bond. Disulfide bonds link Cys-2628–Cys-2649, Cys-2689–Cys-2715, Cys-2742–Cys-2764, Cys-2805–Cys-2831, Cys-2860–Cys-2883, Cys-2920–Cys-2946, and Cys-2977–Cys-2999. Asn-2813, Asn-2875, Asn-2945, and Asn-2989 each carry an N-linked (GlcNAc...) asparagine glycan. Thr-3008 carries the phosphothreonine modification. 2 cysteine pairs are disulfide-bonded: Cys-3037–Cys-3064 and Cys-3091–Cys-3113. Asn-3042, Asn-3106, Asn-3125, and Asn-3165 each carry an N-linked (GlcNAc...) asparagine glycan. 2 disulfides stabilise this stretch: Cys-3157–Cys-3185 and Cys-3215–Cys-3237. N-linked (GlcNAc...) asparagine glycans are attached at residues Asn-3268, Asn-3283, and Asn-3290. Cystine bridges form between Cys-3278-Cys-3306 and Cys-3332-Cys-3354. Asn-3357, Asn-3400, and Asn-3430 each carry an N-linked (GlcNAc...) asparagine glycan. A disulfide bridge connects residues Cys-3395 and Cys-3421. Disulfide bonds link Cys-3448–Cys-3470, Cys-3511–Cys-3537, and Cys-3564–Cys-3586. A glycan (N-linked (GlcNAc...) asparagine) is linked at Asn-3533.

Interacts with AMN. Component of the cubam complex composed of one CUBN trimer and one AMN chain. The cubam complex can dimerize. Interacts with LRP2 in a dual-receptor complex in a calcium-dependent manner. Found in a complex with PID1/PCLI1, LRP1 and CUBNI. Interacts with LRP1 and PID1/PCLI1. In terms of processing, the precursor is cleaved by a trans-Golgi proteinase furin, removing a propeptide. N-glycosylated. As to expression, expressed to intestinal, renal and yalk sac apical membranes. In kidney, expressed in the proximal tubule.

Its subcellular location is the cell membrane. It is found in the endosome membrane. The protein resides in the lysosome membrane. Its function is as follows. Endocytic receptor which plays a role in lipoprotein, vitamin and iron metabolism by facilitating their uptake. Acts together with LRP2 to mediate endocytosis of high-density lipoproteins, GC, hemoglobin, ALB, TF and SCGB1A1. Acts together with AMN to mediate endocytosis of the CBLIF-cobalamin complex. Binds to ALB, MB, Kappa and lambda-light chains, TF, hemoglobin, GC, SCGB1A1, APOA1, high density lipoprotein, and the CBLIF-cobalamin complex. Ligand binding requires calcium. Serves as important transporter in several absorptive epithelia, including intestine, renal proximal tubules and embryonic yolk sac. May play an important role in the development of the peri-implantation embryo through internalization of APOA1 and cholesterol. Binds to LGALS3 at the maternal-fetal interface. The polypeptide is Cubilin (Cubn) (Rattus norvegicus (Rat)).